Consider the following 384-residue polypeptide: MTTHLFTSESVSEGHPDKIADQISDAVLDAILEQDPKARVACETYVKTGMVMVGGEITTKAWVDIEEITRKTVREIGYTSSDMGFDANSCAVISAIGKQSPDINQGVDRADPLEQGAGDQGLMFGYATNETDVLMPAPITYAHRLVQRQAQVRKNGTLPWLRPDAKSQITFQYDNNNIVGIDAVVLSTQHAEDISQKDLHEAVMEEIIKPILPTEWLNEQTKYFINPTGRFVIGGPMGDCGLTGRKIIVDTYGGMARHGGGAFSGKDPSKVDRSAAYAARYVAKNIVAAGLADRCEIQVSYAIGVAEPTSIMVETFGTEKIPTSQLILLVREFFDLRPYGLIQMLDLLHPIYQKTAAYGHFGRAEFPWEATDKAEILREAAGLK.

ATP is bound at residue H15. D17 is a binding site for Mg(2+). Residue E43 participates in K(+) binding. L-methionine is bound by residues E56 and Q99. A flexible loop region spans residues 99–109 (QSPDINQGVDR). Residues 164-166 (DAK), 230-231 (RF), D239, 245-246 (RK), A262, and K266 contribute to the ATP site. D239 lines the L-methionine pocket. K270 contacts L-methionine.

It belongs to the AdoMet synthase family. Homotetramer; dimer of dimers. Mg(2+) serves as cofactor. It depends on K(+) as a cofactor.

The protein localises to the cytoplasm. The catalysed reaction is L-methionine + ATP + H2O = S-adenosyl-L-methionine + phosphate + diphosphate. Its pathway is amino-acid biosynthesis; S-adenosyl-L-methionine biosynthesis; S-adenosyl-L-methionine from L-methionine: step 1/1. In terms of biological role, catalyzes the formation of S-adenosylmethionine (AdoMet) from methionine and ATP. The overall synthetic reaction is composed of two sequential steps, AdoMet formation and the subsequent tripolyphosphate hydrolysis which occurs prior to release of AdoMet from the enzyme. The polypeptide is S-adenosylmethionine synthase (Proteus mirabilis (strain HI4320)).